Consider the following 232-residue polypeptide: MPESADPRDRLIVALDLPDVEAAERLVARIGDAATFYKIGYRLAYAGGLDFAARLAKSGKKTFLDLKLHDIGNTVEEGVRSASALGATFLTVHAYPQTMRAAVRGRGPGLKILAVTVLTSYDDADAAEAGYALPIADLVARRAEQAAEIGIDGIVCSAVEAGAVRHRIGPSGLIVTPGIRPAGAEAGDQKRVMTPGQARAAGIDHVVVGRPITGADDPRAVAQRIVAEMEDA.

Residues Asp16, Lys38, 65–74, Thr119, Arg180, Gln189, Gly209, and Arg210 each bind substrate; that span reads DLKLHDIGNT. Lys67 serves as the catalytic Proton donor.

The protein belongs to the OMP decarboxylase family. Type 1 subfamily. As to quaternary structure, homodimer.

It carries out the reaction orotidine 5'-phosphate + H(+) = UMP + CO2. It participates in pyrimidine metabolism; UMP biosynthesis via de novo pathway; UMP from orotate: step 2/2. Its function is as follows. Catalyzes the decarboxylation of orotidine 5'-monophosphate (OMP) to uridine 5'-monophosphate (UMP). The chain is Orotidine 5'-phosphate decarboxylase from Methylorubrum extorquens (strain PA1) (Methylobacterium extorquens).